A 168-amino-acid polypeptide reads, in one-letter code: MIIFFSIVTFLRNYLMQTLDKLDRHILNVLQQDAMIPLKELSEKVNSSVATCQRRVQSLTDSGIITKRVAVVSPKAVGRTISVFVMVEMDNQHSYYQEQFERKMRQEDEVVSCYEISGDYDFMLLLHAKDMESYHAFTRRVLTGEFHVRTYKSLFVMNFTKADSGIIL.

The HTH asnC-type domain maps to 19–80; sequence LDKLDRHILN…VVSPKAVGRT (62 aa). A DNA-binding region (H-T-H motif) is located at residues 38-57; the sequence is LKELSEKVNSSVATCQRRVQ.

This is an uncharacterized protein from Haemophilus influenzae (strain ATCC 51907 / DSM 11121 / KW20 / Rd).